A 408-amino-acid polypeptide reads, in one-letter code: GTPase Obg (408 aa).

An Obg domain is found at 1–159 (MKFVDEVSIR…RDLKMEMKVL (159 aa)). Residues 127 to 148 (NTRFKSSTNRAPRQTTPGKPGE) form a disordered region. Residues 129 to 143 (RFKSSTNRAPRQTTP) show a composition bias toward polar residues. Positions 160–333 (ADVGLLGLPN…LSHDLMRYLE (174 aa)) constitute an OBG-type G domain. Residues 166–173 (GLPNAGKS), 191–195 (FTTLV), 213–216 (DIPG), 283–286 (NKAD), and 314–316 (SAI) contribute to the GTP site. Residues Ser-173 and Thr-193 each coordinate Mg(2+). A compositionally biased stretch (acidic residues) spans 385-401 (GDDDGWDDDFEDDEDGP). Residues 385–408 (GDDDGWDDDFEDDEDGPEIIYVRD) are disordered.

It belongs to the TRAFAC class OBG-HflX-like GTPase superfamily. OBG GTPase family. In terms of assembly, monomer. Mg(2+) serves as cofactor.

It is found in the cytoplasm. Functionally, an essential GTPase which binds GTP, GDP and possibly (p)ppGpp with moderate affinity, with high nucleotide exchange rates and a fairly low GTP hydrolysis rate. Plays a role in control of the cell cycle, stress response, ribosome biogenesis and in those bacteria that undergo differentiation, in morphogenesis control. The chain is GTPase Obg from Pseudomonas putida (strain ATCC 700007 / DSM 6899 / JCM 31910 / BCRC 17059 / LMG 24140 / F1).